A 70-amino-acid chain; its full sequence is ATP synthase subunit c (70 aa).

A run of 2 helical transmembrane segments spans residues 3 to 23 and 47 to 67; these read FIAA…GNGM and FIGV…AFML.

It belongs to the ATPase C chain family. F-type ATPases have 2 components, F(1) - the catalytic core - and F(0) - the membrane proton channel. F(1) has five subunits: alpha(3), beta(3), gamma(1), delta(1), epsilon(1). F(0) has three main subunits: a(1), b(2) and c(10-14). The alpha and beta chains form an alternating ring which encloses part of the gamma chain. F(1) is attached to F(0) by a central stalk formed by the gamma and epsilon chains, while a peripheral stalk is formed by the delta and b chains.

It localises to the cell membrane. Functionally, f(1)F(0) ATP synthase produces ATP from ADP in the presence of a proton or sodium gradient. F-type ATPases consist of two structural domains, F(1) containing the extramembraneous catalytic core and F(0) containing the membrane proton channel, linked together by a central stalk and a peripheral stalk. During catalysis, ATP synthesis in the catalytic domain of F(1) is coupled via a rotary mechanism of the central stalk subunits to proton translocation. In terms of biological role, key component of the F(0) channel; it plays a direct role in translocation across the membrane. A homomeric c-ring of between 10-14 subunits forms the central stalk rotor element with the F(1) delta and epsilon subunits. The polypeptide is ATP synthase subunit c (Lacticaseibacillus casei (strain BL23) (Lactobacillus casei)).